We begin with the raw amino-acid sequence, 187 residues long: Elongation factor P (187 aa).

This sequence belongs to the elongation factor P family.

It is found in the cytoplasm. It participates in protein biosynthesis; polypeptide chain elongation. Its function is as follows. Involved in peptide bond synthesis. Stimulates efficient translation and peptide-bond synthesis on native or reconstituted 70S ribosomes in vitro. Probably functions indirectly by altering the affinity of the ribosome for aminoacyl-tRNA, thus increasing their reactivity as acceptors for peptidyl transferase. The chain is Elongation factor P from Rhodococcus erythropolis (strain PR4 / NBRC 100887).